The sequence spans 387 residues: Protein TsgA homolog (387 aa).

12 helical membrane-spanning segments follow: residues W11 to M31, N47 to I67, L76 to I96, I101 to I121, L134 to Y154, I160 to T180, I205 to W225, V243 to I263, M271 to S291, I299 to L319, L331 to V351, and T358 to F378.

Belongs to the major facilitator superfamily. TsgA family.

It localises to the cell membrane. This is Protein TsgA homolog from Buchnera aphidicola subsp. Schizaphis graminum (strain Sg).